We begin with the raw amino-acid sequence, 133 residues long: Large-conductance mechanosensitive channel (133 aa).

A run of 2 helical transmembrane segments spans residues A17–F37 and I73–A93.

Belongs to the MscL family. Homopentamer.

Its subcellular location is the cell inner membrane. Its function is as follows. Channel that opens in response to stretch forces in the membrane lipid bilayer. May participate in the regulation of osmotic pressure changes within the cell. This is Large-conductance mechanosensitive channel from Synechococcus elongatus (strain ATCC 33912 / PCC 7942 / FACHB-805) (Anacystis nidulans R2).